The primary structure comprises 686 residues: Polyribonucleotide nucleotidyltransferase (686 aa).

Residues aspartate 478 and aspartate 484 each coordinate Mg(2+). The region spanning 545–604 is the KH domain; it reads PRVEVIQIPTDKIGLLIGPGGKTINALQDEYGVNISVENDGTVYVAGVEGMSVKAAVSAI. An S1 motif domain is found at 614–684; that stretch reads GDIYVGKVVK…KQNRISLEMV (71 aa).

It belongs to the polyribonucleotide nucleotidyltransferase family. Requires Mg(2+) as cofactor.

It localises to the cytoplasm. The catalysed reaction is RNA(n+1) + phosphate = RNA(n) + a ribonucleoside 5'-diphosphate. Involved in mRNA degradation. Catalyzes the phosphorolysis of single-stranded polyribonucleotides processively in the 3'- to 5'-direction. In Rubrobacter xylanophilus (strain DSM 9941 / JCM 11954 / NBRC 16129 / PRD-1), this protein is Polyribonucleotide nucleotidyltransferase.